The following is a 258-amino-acid chain: Thiazole synthase (258 aa).

The Schiff-base intermediate with DXP role is filled by K100. Residues G161, 187-188, and 209-210 contribute to the 1-deoxy-D-xylulose 5-phosphate site; these read AG and NT.

It belongs to the ThiG family. As to quaternary structure, homotetramer. Forms heterodimers with either ThiH or ThiS.

The protein resides in the cytoplasm. It catalyses the reaction [ThiS sulfur-carrier protein]-C-terminal-Gly-aminoethanethioate + 2-iminoacetate + 1-deoxy-D-xylulose 5-phosphate = [ThiS sulfur-carrier protein]-C-terminal Gly-Gly + 2-[(2R,5Z)-2-carboxy-4-methylthiazol-5(2H)-ylidene]ethyl phosphate + 2 H2O + H(+). The protein operates within cofactor biosynthesis; thiamine diphosphate biosynthesis. Functionally, catalyzes the rearrangement of 1-deoxy-D-xylulose 5-phosphate (DXP) to produce the thiazole phosphate moiety of thiamine. Sulfur is provided by the thiocarboxylate moiety of the carrier protein ThiS. In vitro, sulfur can be provided by H(2)S. The sequence is that of Thiazole synthase from Campylobacter jejuni subsp. jejuni serotype O:23/36 (strain 81-176).